The chain runs to 1431 residues: MGARASILRGGKLDAWERIKLKPGGKKHYMMKHLVWASRELERFALDPGLLETSEGCKQIMKQLQPALQTGTKELISLHNTVATLYCVHEKIDVRDTKEALDKIKEEQNKSQQKTQQAEAADKGKVSQNYPIVQNLQGQMVHQPISARTLNAWVKVVEEKAFSPEVIPMFTALSEGATPQDLNTMLNTVGGHQAAMQMLKDTINEEAAEWDRLHPVHAGPVAPGQMREPRGSDIAGTTSTLQEQITWMTNNPPVPVGDIYKRWIILGLNKIVRMYSPVSILDIKQGPKEPFRDYVDRFFKTLRAEQATQDVKNWMTDTLLVQNANPDCKTILRALGPGASLEEMMTACQGVGGPGHKARVLAEAMSKVNNTNIMMQRSNCKGPKRTIKCFNCGKEGHLARNCRAPRKKGCWKCGKEGHQVKDCTERQANFFRENLAFPQGEARKSSSEQNRANSPTRRELQVWGRDNNSLSEAGDDRQGTALNFPQITLWQRPLVNIKVGGQLKEALLDTGADDTVLEEIKLPGNWKPKMIGGIGGFIKVRQYDQILIEICGKKAIGTVLVGPTPVNIIGRNMLTQLGCTLNFPISPIETVPVKLKPGMDGPKVKQWLLTEEKIKALTAICDEMEREGKITKIGPENPYNTPVFAIKKKDSTKWRKLVDFRELNKRTWDFWEVQLGIPHPAGLKKKKSVTVLDVGDAYFSVPLDEGFRKYTAFTIPSINNETPGIRYQYNVLPQGWKGSPSIFQSSTTKILEPFRAQNPEIIIYQYMDDLYVGSDLEIGQHRAKIEELREHLLKWGFTTPDKKHQKEPPFLWMGYELHPDKWTVQPIQLPEKDSWTVNDIQKLVGKLNWASQIYPGIKVRQLCKLLRGAKALTDIVPLTEEAELELAENREILKEPVHGVYYDPSKDLIAEIQKQGQNQWTYQIYQEPFKNLKTGKYAKMRTAHTNDVRQLTEAVQKIALESIIIWGKTPKFRLPIQKETWEAWWTDYWQATWIPEWEFVNTPPLVKLWYQLEKEPIAGAETFYVDGAANREIKMGKAGYVTDRGRQKIVSITETTNQKTELQAIQLALQDSGSEVNIVTDSQYALGIIQAQPDKSESELVNQIIEQLIKKERVYLSWVPAHKGIGGNEQVDKLVSSGIRKVLFLDGINKAQEEHEKYHSNWRAMASEFNLPPIVAKEIVASCDKCQLKGEATHGQVDCSPGIWQLDCTHLEGKIILVAVHVASGYIEAEVIPAETGQETAYFILKLAGRWPVKVIHTDNGSNFISNTVKAACWWAGIQQEFGIPYNPQSQGVVESMNKELKKIIGQVRDQAEHLKTAVQMAVFIHNFKRKGGIGGYSAGERIIDIIATDIQTKELQKQIMKIQNFRVYYRDSRDPIWKGPAKLLWKGEGAVVLQDNSDIKVVPRRKVKIIKDYGKQMAGADCMASRQDED.

G2 carries the N-myristoyl glycine; by host lipid modification. The interval 7-31 (ILRGGKLDAWERIKLKPGGKKHYMM) is interaction with Gp41. The segment at 8-43 (LRGGKLDAWERIKLKPGGKKHYMMKHLVWASRELER) is interaction with host CALM1. Residues 12–19 (KLDAWERI) are interaction with host AP3D1. The interval 14–33 (DAWERIKLKPGGKKHYMMKH) is interaction with membrane phosphatidylinositol 4,5-bisphosphate and RNA. The Nuclear export signal signature appears at 16–22 (WERIKLK). Positions 26 to 32 (KKHYMMK) match the Nuclear localization signal motif. The segment at 73–77 (KELIS) is interaction with membrane phosphatidylinositol 4,5-bisphosphate. The disordered stretch occupies residues 106–126 (EEQNKSQQKTQQAEAADKGKV). Y130 carries the post-translational modification Phosphotyrosine; by host. An interaction with human PPIA/CYPA and NUP153 region spans residues 187–225 (NTVGGHQAAMQMLKDTINEEAAEWDRLHPVHAGPVAPGQ). The dimerization/Multimerization of capsid protein p24 stretch occupies residues 275 to 361 (YSPVSILDIK…GGPGHKARVL (87 aa)). CCHC-type zinc fingers lie at residues 387 to 404 (IKCF…NCRA) and 408 to 425 (KGCW…DCTE). A disordered region spans residues 437-461 (FPQGEARKSSSEQNRANSPTRRELQ). The tract at residues 485-489 (PQITL) is dimerization of protease. A Peptidase A2 domain is found at 504 to 573 (KEALLDTGAD…TPVNIIGRNM (70 aa)). The For protease activity; shared with dimeric partner role is filled by D509. 2 dimerization of protease regions span residues 533–539 (GIGGFIK) and 572–584 (NMLT…LNFP). The region spanning 627-817 (EGKITKIGPE…PPFLWMGYEL (191 aa)) is the Reverse transcriptase domain. D693, D768, and D769 together coordinate Mg(2+). The interval 810 to 818 (FLWMGYELH) is RT 'primer grip'. Residues 981–997 (WEAWWTDYWQATWIPEW) carry the Tryptophan repeat motif motif. Residues 1017–1140 (IAGAETFYVD…VDKLVSSGIR (124 aa)) form the RNase H type-1 domain. The Mg(2+) site is built by D1026, E1061, D1081, and D1132. Residues 1146-1187 (DGINKAQEEHEKYHSNWRAMASEFNLPPIVAKEIVASCDKCQ) form an Integrase-type zinc finger. Residues H1155, H1159, C1183, and C1186 each contribute to the Zn(2+) site. The region spanning 1197–1347 (VDCSPGIWQL…SAGERIIDII (151 aa)) is the Integrase catalytic domain. Mg(2+) contacts are provided by D1207, D1259, and E1295. The integrase-type DNA-binding region spans 1366-1413 (FRVYYRDSRDPIWKGPAKLLWKGEGAVVLQDNSDIKVVPRRKVKIIKD).

Homotrimer; further assembles as hexamers of trimers. Interacts with gp41 (via C-terminus). Interacts with host CALM1; this interaction induces a conformational change in the Matrix protein, triggering exposure of the myristate group. Interacts with host AP3D1; this interaction allows the polyprotein trafficking to multivesicular bodies during virus assembly. Part of the pre-integration complex (PIC) which is composed of viral genome, matrix protein, Vpr and integrase. As to quaternary structure, homodimer; the homodimer further multimerizes as homohexamers or homopentamers. Interacts with human PPIA/CYPA; This interaction stabilizes the capsid. Interacts with human NUP153. Interacts with host PDZD8; this interaction stabilizes the capsid. Interacts with monkey TRIM5; this interaction destabilizes the capsid. In terms of assembly, homodimer, whose active site consists of two apposed aspartic acid residues. Heterodimer of p66 RT and p51 RT (RT p66/p51). Heterodimerization of RT is essential for DNA polymerase activity. The overall folding of the subdomains is similar in p66 RT and p51 RT but the spatial arrangements of the subdomains are dramatically different. As to quaternary structure, homotetramer; may further associate as a homohexadecamer. Part of the pre-integration complex (PIC) which is composed of viral genome, matrix protein, Vpr and integrase. Interacts with human SMARCB1/INI1 and human PSIP1/LEDGF isoform 1. Interacts with human KPNA3; this interaction might play a role in nuclear import of the pre-integration complex. Interacts with human NUP153; this interaction might play a role in nuclear import of the pre-integration complex. It depends on Mg(2+) as a cofactor. In terms of processing, specific enzymatic cleavages by the viral protease yield mature proteins. The protease is released by autocatalytic cleavage. The polyprotein is cleaved during and after budding, this process is termed maturation. Proteolytic cleavage of p66 RT removes the RNase H domain to yield the p51 RT subunit. Nucleocapsid protein p7 might be further cleaved after virus entry. Tyrosine phosphorylated presumably in the virion by a host kinase. Phosphorylation is apparently not a major regulator of membrane association. Post-translationally, phosphorylated possibly by host MAPK1; this phosphorylation is necessary for Pin1-mediated virion uncoating. In terms of processing, methylated by host PRMT6, impairing its function by reducing RNA annealing and the initiation of reverse transcription.

The protein resides in the host cell membrane. Its subcellular location is the host endosome. The protein localises to the host multivesicular body. It localises to the virion membrane. It is found in the host nucleus. The protein resides in the host cytoplasm. Its subcellular location is the virion. It carries out the reaction Specific for a P1 residue that is hydrophobic, and P1' variable, but often Pro.. The catalysed reaction is Endohydrolysis of RNA in RNA/DNA hybrids. Three different cleavage modes: 1. sequence-specific internal cleavage of RNA. Human immunodeficiency virus type 1 and Moloney murine leukemia virus enzymes prefer to cleave the RNA strand one nucleotide away from the RNA-DNA junction. 2. RNA 5'-end directed cleavage 13-19 nucleotides from the RNA end. 3. DNA 3'-end directed cleavage 15-20 nucleotides away from the primer terminus.. It catalyses the reaction 3'-end directed exonucleolytic cleavage of viral RNA-DNA hybrid.. The enzyme catalyses DNA(n) + a 2'-deoxyribonucleoside 5'-triphosphate = DNA(n+1) + diphosphate. With respect to regulation, protease: The viral protease is inhibited by many synthetic protease inhibitors (PIs), such as amprenavir, atazanavir, indinavir, loprinavir, nelfinavir, ritonavir and saquinavir. Use of protease inhibitors in tritherapy regimens permit more ambitious therapeutic strategies. Reverse transcriptase/ribonuclease H: RT can be inhibited either by nucleoside RT inhibitors (NRTIs) or by non nucleoside RT inhibitors (NNRTIs). NRTIs act as chain terminators, whereas NNRTIs inhibit DNA polymerization by binding a small hydrophobic pocket near the RT active site and inducing an allosteric change in this region. Classical NRTIs are abacavir, adefovir (PMEA), didanosine (ddI), lamivudine (3TC), stavudine (d4T), tenofovir (PMPA), zalcitabine (ddC), and zidovudine (AZT). Classical NNRTIs are atevirdine (BHAP U-87201E), delavirdine, efavirenz (DMP-266), emivirine (I-EBU), and nevirapine (BI-RG-587). The tritherapies used as a basic effective treatment of AIDS associate two NRTIs and one NNRTI. Functionally, mediates, with Gag polyprotein, the essential events in virion assembly, including binding the plasma membrane, making the protein-protein interactions necessary to create spherical particles, recruiting the viral Env proteins, and packaging the genomic RNA via direct interactions with the RNA packaging sequence (Psi). Gag-Pol polyprotein may regulate its own translation, by the binding genomic RNA in the 5'-UTR. At low concentration, the polyprotein would promote translation, whereas at high concentration, the polyprotein would encapsidate genomic RNA and then shut off translation. Targets the polyprotein to the plasma membrane via a multipartite membrane-binding signal, that includes its myristoylated N-terminus. Matrix protein is part of the pre-integration complex. Implicated in the release from host cell mediated by Vpu. Binds to RNA. In terms of biological role, forms the conical core that encapsulates the genomic RNA-nucleocapsid complex in the virion. Most core are conical, with only 7% tubular. The core is constituted by capsid protein hexamer subunits. The core is disassembled soon after virion entry. Host restriction factors such as TRIM5-alpha or TRIMCyp bind retroviral capsids and cause premature capsid disassembly, leading to blocks in reverse transcription. Capsid restriction by TRIM5 is one of the factors which restricts HIV-1 to the human species. Host PIN1 apparently facilitates the virion uncoating. On the other hand, interactions with PDZD8 or CYPA stabilize the capsid. Its function is as follows. Encapsulates and protects viral dimeric unspliced genomic RNA (gRNA). Binds these RNAs through its zinc fingers. Acts as a nucleic acid chaperone which is involved in rearangement of nucleic acid secondary structure during gRNA retrotranscription. Also facilitates template switch leading to recombination. As part of the polyprotein, participates in gRNA dimerization, packaging, tRNA incorporation and virion assembly. Functionally, aspartyl protease that mediates proteolytic cleavages of Gag and Gag-Pol polyproteins during or shortly after the release of the virion from the plasma membrane. Cleavages take place as an ordered, step-wise cascade to yield mature proteins. This process is called maturation. Displays maximal activity during the budding process just prior to particle release from the cell. Also cleaves Nef and Vif, probably concomitantly with viral structural proteins on maturation of virus particles. Hydrolyzes host EIF4GI and PABP1 in order to shut off the capped cellular mRNA translation. The resulting inhibition of cellular protein synthesis serves to ensure maximal viral gene expression and to evade host immune response. Also mediates cleavage of host YTHDF3. Mediates cleavage of host CARD8, thereby activating the CARD8 inflammasome, leading to the clearance of latent HIV-1 in patient CD4(+) T-cells after viral reactivation; in contrast, HIV-1 can evade CARD8-sensing when its protease remains inactive in infected cells prior to viral budding. Multifunctional enzyme that converts the viral RNA genome into dsDNA in the cytoplasm, shortly after virus entry into the cell. This enzyme displays a DNA polymerase activity that can copy either DNA or RNA templates, and a ribonuclease H (RNase H) activity that cleaves the RNA strand of RNA-DNA heteroduplexes in a partially processive 3' to 5' endonucleasic mode. Conversion of viral genomic RNA into dsDNA requires many steps. A tRNA(3)-Lys binds to the primer-binding site (PBS) situated at the 5'-end of the viral RNA. RT uses the 3' end of the tRNA primer to perform a short round of RNA-dependent minus-strand DNA synthesis. The reading proceeds through the U5 region and ends after the repeated (R) region which is present at both ends of viral RNA. The portion of the RNA-DNA heteroduplex is digested by the RNase H, resulting in a ssDNA product attached to the tRNA primer. This ssDNA/tRNA hybridizes with the identical R region situated at the 3' end of viral RNA. This template exchange, known as minus-strand DNA strong stop transfer, can be either intra- or intermolecular. RT uses the 3' end of this newly synthesized short ssDNA to perform the RNA-dependent minus-strand DNA synthesis of the whole template. RNase H digests the RNA template except for two polypurine tracts (PPTs) situated at the 5'-end and near the center of the genome. It is not clear if both polymerase and RNase H activities are simultaneous. RNase H probably can proceed both in a polymerase-dependent (RNA cut into small fragments by the same RT performing DNA synthesis) and a polymerase-independent mode (cleavage of remaining RNA fragments by free RTs). Secondly, RT performs DNA-directed plus-strand DNA synthesis using the PPTs that have not been removed by RNase H as primers. PPTs and tRNA primers are then removed by RNase H. The 3' and 5' ssDNA PBS regions hybridize to form a circular dsDNA intermediate. Strand displacement synthesis by RT to the PBS and PPT ends produces a blunt ended, linear dsDNA copy of the viral genome that includes long terminal repeats (LTRs) at both ends. In terms of biological role, catalyzes viral DNA integration into the host chromosome, by performing a series of DNA cutting and joining reactions. This enzyme activity takes place after virion entry into a cell and reverse transcription of the RNA genome in dsDNA. The first step in the integration process is 3' processing. This step requires a complex comprising the viral genome, matrix protein, Vpr and integrase. This complex is called the pre-integration complex (PIC). The integrase protein removes 2 nucleotides from each 3' end of the viral DNA, leaving recessed CA OH's at the 3' ends. In the second step, the PIC enters cell nucleus. This process is mediated through integrase and Vpr proteins, and allows the virus to infect a non dividing cell. This ability to enter the nucleus is specific of lentiviruses, other retroviruses cannot and rely on cell division to access cell chromosomes. In the third step, termed strand transfer, the integrase protein joins the previously processed 3' ends to the 5' ends of strands of target cellular DNA at the site of integration. The 5'-ends are produced by integrase-catalyzed staggered cuts, 5 bp apart. A Y-shaped, gapped, recombination intermediate results, with the 5'-ends of the viral DNA strands and the 3' ends of target DNA strands remaining unjoined, flanking a gap of 5 bp. The last step is viral DNA integration into host chromosome. This involves host DNA repair synthesis in which the 5 bp gaps between the unjoined strands are filled in and then ligated. Since this process occurs at both cuts flanking the HIV genome, a 5 bp duplication of host DNA is produced at the ends of HIV-1 integration. Alternatively, Integrase may catalyze the excision of viral DNA just after strand transfer, this is termed disintegration. The polypeptide is Gag-Pol polyprotein (gag-pol) (Homo sapiens (Human)).